Reading from the N-terminus, the 62-residue chain is MKPAIFLMLFVAMFLISEGEGFKPKDAPQERSVFSPVVQSCPRCHRRDHFGKCRKLDPCPDK.

The N-terminal stretch at 1-21 (MKPAIFLMLFVAMFLISEGEG) is a signal peptide. A propeptide spanning residues 22–31 (FKPKDAPQER) is cleaved from the precursor. At P36 the chain carries Hydroxyproline. 2 cysteine pairs are disulfide-bonded: C41–C53 and C44–C59.

This sequence belongs to the Hau1a/HC18/HC19 family.

Its subcellular location is the secreted. It is found in the nematocyst. In terms of biological role, toxin that is lethal to crab. Does not produce the typical symptoms associated with sodium channel toxins in crabs, suggesting that it likely does not act on sodium channels. The polypeptide is U-stichotoxin-Hau1a (Heteractis aurora (Banded sea anemone)).